The sequence spans 292 residues: Protein LRATD1 (292 aa).

Residue S38 is modified to Phosphoserine. One can recognise an LRAT domain in the interval 133–228 (PATEQPAPAP…CRFGKREFKA (96 aa)).

It belongs to the LRATD family.

It is found in the cytoplasm. Functionally, may play a role in cell morphology and motility. This chain is Protein LRATD1, found in Mus musculus (Mouse).